Reading from the N-terminus, the 221-residue chain is Deoxyribose-phosphate aldolase (221 aa).

Asp89 acts as the Proton donor/acceptor in catalysis. Catalysis depends on Lys151, which acts as the Schiff-base intermediate with acetaldehyde. The active-site Proton donor/acceptor is Lys180.

This sequence belongs to the DeoC/FbaB aldolase family. DeoC type 1 subfamily.

It localises to the cytoplasm. It carries out the reaction 2-deoxy-D-ribose 5-phosphate = D-glyceraldehyde 3-phosphate + acetaldehyde. It participates in carbohydrate degradation; 2-deoxy-D-ribose 1-phosphate degradation; D-glyceraldehyde 3-phosphate and acetaldehyde from 2-deoxy-alpha-D-ribose 1-phosphate: step 2/2. Catalyzes a reversible aldol reaction between acetaldehyde and D-glyceraldehyde 3-phosphate to generate 2-deoxy-D-ribose 5-phosphate. This is Deoxyribose-phosphate aldolase from Mesomycoplasma hyopneumoniae (strain 232) (Mycoplasma hyopneumoniae).